The chain runs to 364 residues: Coproporphyrin III ferrochelatase (364 aa).

Positions 29 and 118 each coordinate Fe-coproporphyrin III. Fe(2+)-binding residues include H169 and E250.

The protein belongs to the ferrochelatase family.

It localises to the cytoplasm. The catalysed reaction is Fe-coproporphyrin III + 2 H(+) = coproporphyrin III + Fe(2+). It participates in porphyrin-containing compound metabolism; protoheme biosynthesis. In terms of biological role, involved in coproporphyrin-dependent heme b biosynthesis. Catalyzes the insertion of ferrous iron into coproporphyrin III to form Fe-coproporphyrin III. In Streptococcus pneumoniae (strain 70585), this protein is Coproporphyrin III ferrochelatase.